Here is a 567-residue protein sequence, read N- to C-terminus: Geraniol synthase, chloroplastic (567 aa).

A chloroplast-targeting transit peptide spans 1-63 (MSCARITVTL…GDNSQRKNTR (63 aa)). The interval 48 to 75 (STPLINGDNSQRKNTRQHMEESSSKRRE) is disordered. Over residues 64 to 75 (QHMEESSSKRRE) the composition is skewed to basic and acidic residues. Positions 286, 323, 327, 466, and 469 each coordinate (2E)-geranyl diphosphate. 2 residues coordinate Mn(2+): Asp-323 and Asp-327. The short motif at 323–327 (DDIFD) is the DDXXD motif element. Residues Asp-469, Thr-473, and Glu-477 each contribute to the Mn(2+) site.

The protein belongs to the terpene synthase family. Tpsb subfamily. In terms of assembly, homodimer. The cofactor is Mn(2+). Expressed in the peltate glandular trichomes of the leaves.

The protein resides in the plastid. It localises to the chloroplast. It carries out the reaction (2E)-geranyl diphosphate + H2O = (2E)-geraniol + diphosphate. The protein operates within secondary metabolite biosynthesis; terpenoid biosynthesis. In terms of biological role, monoterpene synthase that catalyzes the formation of geraniol from geranyl diphosphate. The chain is Geraniol synthase, chloroplastic (GES) from Ocimum basilicum (Sweet basil).